The chain runs to 59 residues: Potassium channel toxin alpha-KTx 4.7 (59 aa).

The first 22 residues, 1-22 (MKAFYGILIIFILISMLDLSQQ), serve as a signal peptide directing secretion. 3 disulfides stabilise this stretch: Cys-29–Cys-50, Cys-35–Cys-55, and Cys-39–Cys-57. Residues 48 to 55 (GKCMNGKC) form an interaction with Ca(2+)-activated K(+) channels region.

The protein belongs to the short scorpion toxin superfamily. Potassium channel inhibitor family. Alpha-KTx 04 subfamily. Expressed by the venom gland.

It localises to the secreted. Potently blocks Kv1.1/KCNA1 (85%), Kv1.2/KCNA2 (91%), Kv1.3/KCNA3 (89%), Kv1.6/KCNA6 (94%), and Shaker (97%). The sequence is that of Potassium channel toxin alpha-KTx 4.7 from Tityus stigmurus (Brazilian scorpion).